A 185-amino-acid chain; its full sequence is Ribonuclease HII (185 aa).

Positions Met-1–Leu-185 constitute an RNase H type-2 domain. The a divalent metal cation site is built by Asp-7, Glu-8, and Asp-99.

The protein belongs to the RNase HII family. Mn(2+) serves as cofactor. It depends on Mg(2+) as a cofactor.

The protein resides in the cytoplasm. The enzyme catalyses Endonucleolytic cleavage to 5'-phosphomonoester.. Its function is as follows. Endonuclease that specifically degrades the RNA of RNA-DNA hybrids. The polypeptide is Ribonuclease HII (Francisella tularensis subsp. novicida (strain U112)).